We begin with the raw amino-acid sequence, 895 residues long: WD repeat-containing protein 36 (895 aa).

WD repeat units follow at residues valine 30–valine 63, cysteine 72–threonine 101, histidine 110–threonine 143, serine 152–threonine 186, glycine 193–arginine 230, threonine 237–methionine 272, serine 277–methionine 320, and threonine 327–serine 361. Phosphoserine is present on residues serine 382 and serine 399. 6 WD repeats span residues threonine 389–phenylalanine 428, alanine 441–serine 475, valine 486–serine 522, proline 527–phenylalanine 562, glycine 564–leucine 605, and aspartate 607–serine 645.

Part of the small subunit (SSU) processome, composed of more than 70 proteins and the RNA chaperone small nucleolar RNA (snoRNA) U3. In terms of tissue distribution, expressed in heart, placenta, liver, skeletal muscle, kidney and pancreas. In ocular tissues, strong expression in iris, sclera, ciliary muscle, ciliary body, retina and optic nerve.

It localises to the nucleus. Its subcellular location is the nucleolus. Functionally, part of the small subunit (SSU) processome, first precursor of the small eukaryotic ribosomal subunit. During the assembly of the SSU processome in the nucleolus, many ribosome biogenesis factors, an RNA chaperone and ribosomal proteins associate with the nascent pre-rRNA and work in concert to generate RNA folding, modifications, rearrangements and cleavage as well as targeted degradation of pre-ribosomal RNA by the RNA exosome. Involved in the nucleolar processing of SSU 18S rRNA. Involved in T-cell activation and highly coregulated with IL2. The sequence is that of WD repeat-containing protein 36 from Homo sapiens (Human).